The following is a 201-amino-acid chain: Thymidylate kinase (201 aa).

An ATP-binding site is contributed by 7–14 (GIDGSGKS).

This sequence belongs to the thymidylate kinase family.

It catalyses the reaction dTMP + ATP = dTDP + ADP. Functionally, phosphorylation of dTMP to form dTDP in both de novo and salvage pathways of dTTP synthesis. The sequence is that of Thymidylate kinase from Thermosipho africanus (strain TCF52B).